We begin with the raw amino-acid sequence, 221 residues long: MTKNINIAIDGPSGVGKSTIAKKLADHLNYVFINTGLFYRAIAFYKDKFNLTQDLLVKELKNIKINYVNEDQIFLNNQDIAPYLRDEKISEQASEISTILDIRNFINQIIIDTMKVKKGYVIEGRDTTFKLAPDAEVRIFLDASSPIRARRRVLQNSQLNTESNYEKILDNINKRDYSDRNREVDPLHVAQGVIAIVNDHMNIEETFEKILGLVNEAIDKK.

11 to 19 (GPSGVGKST) is a binding site for ATP.

This sequence belongs to the cytidylate kinase family. Type 1 subfamily.

The protein localises to the cytoplasm. It catalyses the reaction CMP + ATP = CDP + ADP. The catalysed reaction is dCMP + ATP = dCDP + ADP. In Mycoplasmopsis pulmonis (strain UAB CTIP) (Mycoplasma pulmonis), this protein is Cytidylate kinase.